A 271-amino-acid chain; its full sequence is MDLLAKASVLLLLLLSLSNAQTDNMEEAENGSSKEEIDESELEDVSSIIFRMNNNSMEELLEGDLVLPKTRNAMKCFGAPDSCRWPKSSNGIVKVPYVVSDNYESDEKETIRNAMKEFAEKTCIHFVPRNNERAYLSLEPRFGCKSMMGYVGDKQVVVLQRFGCIKHAVIQHELLHALGFYHEHTRSDRDQHVKINWENIIKDFTHNFDKNDTDNLGTPYDYGSIMHYGRTAFGKDRKETITPIPNPKAAIGQTERMSDIDILRVNKLYKC.

Residues 1–20 form the signal peptide; that stretch reads MDLLAKASVLLLLLLSLSNA. The propeptide at 21–71 is activation peptide; sequence QTDNMEEAENGSSKEEIDESELEDVSSIIFRMNNNSMEELLEGDLVLPKTR. N-linked (GlcNAc...) asparagine glycosylation is found at N30 and N54. A Peptidase M12A domain is found at 72–271; that stretch reads NAMKCFGAPD…ILRVNKLYKC (200 aa). 3 cysteine pairs are disulfide-bonded: C76-C83, C123-C271, and C144-C164. H172 lines the Zn(2+) pocket. Residue E173 is part of the active site. Positions 176 and 182 each coordinate Zn(2+). An N-linked (GlcNAc...) asparagine glycan is attached at N211.

Zn(2+) serves as cofactor.

It localises to the zymogen granule. It carries out the reaction Hydrolysis of the inner layer of fish egg envelope. Also hydrolysis of casein and small molecule substrates such as succinyl-Leu-Leu-Val-Tyr-|-7-(4-methyl)coumarylamide.. Functionally, participates in the breakdown of the egg envelope, which is derived from the egg extracellular matrix, at the time of hatching. Thus allowing the newly hatched fish to swim free. LCE solubilizes the egg envelope only after it has been swollen by the action of HCE. This chain is Low choriolytic enzyme (lce), found in Oryzias latipes (Japanese rice fish).